The following is a 207-amino-acid chain: Ribosomal RNA small subunit methyltransferase G (207 aa).

S-adenosyl-L-methionine-binding positions include glycine 73, leucine 78, 124–125 (VE), and arginine 139.

It belongs to the methyltransferase superfamily. RNA methyltransferase RsmG family.

The protein resides in the cytoplasm. It carries out the reaction guanosine(527) in 16S rRNA + S-adenosyl-L-methionine = N(7)-methylguanosine(527) in 16S rRNA + S-adenosyl-L-homocysteine. In terms of biological role, specifically methylates the N7 position of guanine in position 527 of 16S rRNA. This is Ribosomal RNA small subunit methyltransferase G from Escherichia fergusonii (strain ATCC 35469 / DSM 13698 / CCUG 18766 / IAM 14443 / JCM 21226 / LMG 7866 / NBRC 102419 / NCTC 12128 / CDC 0568-73).